Reading from the N-terminus, the 270-residue chain is Probable sulfate transport system permease protein cysT (270 aa).

The next 7 membrane-spanning stretches (helical) occupy residues 13 to 33 (LIVISYSILILILPLYALFSY), 61 to 81 (MALYTAIINTIFGFIIAWVLT), 94 to 114 (IVDLPLALPTSVAGLALSTVF), 138 to 158 (ILLAMIFVSFPFSVRAIQPIL), 180 to 200 (FKRFIFPIILPAILNGFTLTF), 208 to 228 (GSIVMVAGNLPLQDLVSSVLI), and 238 to 258 (IGACVISIIVLMLACSVLLFV). The ABC transmembrane type-1 domain maps to 55-256 (YTLTIKMALY…VLMLACSVLL (202 aa)).

The protein belongs to the binding-protein-dependent transport system permease family. CysTW subfamily.

Its subcellular location is the plastid membrane. Its function is as follows. Part of the ABC transporter complex cysAWTP (TC 3.A.1.6.1) involved in sulfate/thiosulfate import. Probably responsible for the translocation of the substrate across the membrane. The sequence is that of Probable sulfate transport system permease protein cysT (cysT) from Helicosporidium sp. subsp. Simulium jonesii (Green alga).